Consider the following 236-residue polypeptide: Mitochondrial coenzyme A diphosphatase NUDT8 (236 aa).

The region spanning 25 to 172 is the Nudix hydrolase domain; it reads LRARPASAAV…HFRYTLPVFL (148 aa). The residue at position 70 (lysine 70) is an N6-succinyllysine. Residues 70 to 91 carry the Nudix box motif; the sequence is KCDPADQDVVHTALRETREELG. Glutamate 85 and glutamate 89 together coordinate Mg(2+).

This sequence belongs to the Nudix hydrolase family. Monomer. Mg(2+) serves as cofactor. It depends on Mn(2+) as a cofactor.

The protein resides in the mitochondrion. The catalysed reaction is an acyl-CoA + H2O = an acyl-4'-phosphopantetheine + adenosine 3',5'-bisphosphate + 2 H(+). The enzyme catalyses CoA + H2O = (R)-4'-phosphopantetheine + adenosine 3',5'-bisphosphate + 2 H(+). It carries out the reaction acetyl-CoA + H2O = S-acetyl-4'-phosphopantetheine + adenosine 3',5'-bisphosphate + 2 H(+). It catalyses the reaction butanoyl-CoA + H2O = S-butanoyl-4'-phosphopantetheine + adenosine 3',5'-bisphosphate + 2 H(+). The catalysed reaction is hexanoyl-CoA + H2O = hexanoyl-4'-phosphopantetheine + adenosine 3',5'-bisphosphate + 2 H(+). The enzyme catalyses octanoyl-CoA + H2O = S-octanoyl-4'-phosphopantetheine + adenosine 3',5'-bisphosphate + 2 H(+). It carries out the reaction propanoyl-CoA + H2O = propanoyl-4'-phosphopantetheine + adenosine 3',5'-bisphosphate + 2 H(+). It catalyses the reaction malonyl-CoA + H2O = malonyl-4'-phosphopantetheine + adenosine 3',5'-bisphosphate + 2 H(+). The catalysed reaction is succinyl-CoA + H2O = succinyl-4'-phosphopantetheine + adenosine 3',5'-bisphosphate + 2 H(+). The enzyme catalyses a 5'-end CoA-ribonucleoside in mRNA + H2O = a 5'-end phospho-adenosine-phospho-ribonucleoside in mRNA + (R)-4'-phosphopantetheine + 2 H(+). Acyl-CoA diphosphatase that mediates the hydrolysis of a wide range of CoA and CoA esters yielding 3',5'-ADP and the corresponding 4'-phosphopantetheine derivative as products. Hydrolyzes short- and medium-chain acyl-CoAs, exhibiting the highest activity toward free CoA, hexanoyl-CoA, and octanoyl-CoA and the lowest activity against acetyl-CoA. Exhibits decapping activity towards dpCoA-capped RNAs in vitro. The chain is Mitochondrial coenzyme A diphosphatase NUDT8 (NUDT8) from Homo sapiens (Human).